We begin with the raw amino-acid sequence, 245 residues long: P2Y purinoceptor 13 (245 aa).

Residues 1–9 (QLRAFVCRL) are Extracellular-facing. An intrachain disulfide couples Cys-7 to Cys-85. Residues 10-30 (SSVIFYETMYVGIVLLGLIAF) form a helical membrane-spanning segment. The Cytoplasmic segment spans residues 31–35 (DRFLK). Residues 36 to 56 (IIRPLRNIFLKKTVFAKTVSV) traverse the membrane as a helical segment. At 57–85 (FIWSFFFFISLPNMILSNKEATPSSVKKC) the chain is on the extracellular side. Residues 86-106 (ASLKGPLGLKWHQIVNNISQF) traverse the membrane as a helical segment. At 107 to 126 (IFWTVFVLMLVFYVVIAKKV) the chain is on the cytoplasmic side. Residues 127-147 (YDSYRKSKSKDRKNNKKLEGK) form a helical membrane-spanning segment. Residues 148 to 174 (VFVVVAVFFVCFAPFHFTRVPYTYSQT) lie on the Extracellular side of the membrane. Residues 175-195 (NNKTDCRLQNQLFIAKETTLF) form a helical membrane-spanning segment. Residues 196–245 (LAATNICMDPLIYIFLCKKFTEKLPCMRGRKTIASSQENQSSQTDNITLG) are Cytoplasmic-facing.

This sequence belongs to the G-protein coupled receptor 1 family.

The protein localises to the cell membrane. Receptor for ADP. Coupled to G(i)-proteins. May play a role in hematopoiesis and the immune system. The chain is P2Y purinoceptor 13 (P2RY13) from Macaca fascicularis (Crab-eating macaque).